We begin with the raw amino-acid sequence, 472 residues long: Serine incorporator 3 (472 aa).

Residues 1–95 (MGAVLGVFSL…KECDVLVRYK (95 aa)) lie on the Extracellular side of the membrane. N-linked (GlcNAc...) asparagine glycosylation occurs at Asn34. Residues 96 to 116 (AVYRISFALAVFFFAFSLLML) form a helical membrane-spanning segment. Residues 117–131 (NVKTSKDPRAAIHNG) lie on the Cytoplasmic side of the membrane. A helical transmembrane segment spans residues 132–152 (FWFFKIAAIVGVMVGSFYIPG). At 153 to 158 (GHFNTA) the chain is on the extracellular side. Residues 159–179 (WFVIGMVGAAFFILIQLVLLV) form a helical membrane-spanning segment. Topologically, residues 180–202 (DFAHSWNESWVNRMEEGNPKCWY) are cytoplasmic. The chain crosses the membrane as a helical span at residues 203 to 223 (AALLSVTSLFYILSIIFAGLL). Topologically, residues 224 to 238 (YTYYTKPDGCTENKF) are extracellular. Residues 239 to 259 (FISFNLILCVVISVLSIHPKI) form a helical membrane-spanning segment. The Cytoplasmic segment spans residues 260-328 (QEHQPRSGLL…APTPAVPLQS (69 aa)). The helical transmembrane segment at 329–349 (GPSLNKENFIGLLVFVLSLSY) threads the bilayer. Residues 350 to 405 (SSIRNSSNSQVSKLTLSGSDSVILRDTAANGASDEEDGRPRRAVDNEREGVQYNYS) are Extracellular-facing. Residue Asn354 is glycosylated (N-linked (GlcNAc...) asparagine). Ser370 bears the Phosphoserine mark. N-linked (GlcNAc...) asparagine glycosylation occurs at Asn403. Residues 406-426 (MFHLMLCSASLYIMMTLTNWY) traverse the membrane as a helical segment. At 427–445 (SPDANFQSMTSKWPAVWVK) the chain is on the cytoplasmic side. A helical transmembrane segment spans residues 446-466 (ISSSWVCLLLYVWTLVAPLVL). Residues 467–472 (TNRDFS) lie on the Extracellular side of the membrane.

This sequence belongs to the TDE1 family. N-glycosylated.

The protein localises to the cell membrane. The protein resides in the golgi apparatus membrane. The enzyme catalyses a 1,2-diacyl-sn-glycero-3-phospho-L-serine(in) = a 1,2-diacyl-sn-glycero-3-phospho-L-serine(out). The catalysed reaction is a 1,2-diacyl-sn-glycero-3-phosphocholine(in) = a 1,2-diacyl-sn-glycero-3-phosphocholine(out). It carries out the reaction a 1,2-diacyl-sn-glycero-3-phosphoethanolamine(in) = a 1,2-diacyl-sn-glycero-3-phosphoethanolamine(out). In terms of biological role, restriction factor required to restrict infectivity of gammaretroviruses: acts by inhibiting an early step of viral infection. Impairs the penetration of the viral particle into the cytoplasm. Non-ATP-dependent, non-specific lipid transporter for phosphatidylserine, phosphatidylcholine, and phosphatidylethanolamine. Functions as a scramblase that flips lipids in both directions across the membrane. Phospholipid scrambling results in gammaretroviral surface exposure of phosphatidylserine and loss of membrane asymmetry, which leads to loss of infectivity. This Bos taurus (Bovine) protein is Serine incorporator 3 (SERINC3).